The primary structure comprises 399 residues: Rho GTPase-activating protein gacC (399 aa).

Residues 1–13 (MESKDQNVYRKGS) are compositionally biased toward basic and acidic residues. The segment at 1–80 (MESKDQNVYR…SSSTSTTPVK (80 aa)) is disordered. A compositionally biased stretch (polar residues) spans 14-31 (DNFSKGSNTFFGNLKSIS). Low complexity predominate over residues 61 to 79 (SVDSSSSNPSSSSTSTTPV). The region spanning 186–375 (VELEESFKTA…NLISFFQQIF (190 aa)) is the Rho-GAP domain.

Its subcellular location is the cytoplasm. Its function is as follows. Rho GTPase-activating protein involved in the signal transduction pathway. The polypeptide is Rho GTPase-activating protein gacC (gacC) (Dictyostelium discoideum (Social amoeba)).